Here is a 29-residue protein sequence, read N- to C-terminus: Trypsin inhibitor 4 (29 aa).

Cystine bridges form between cysteine 3-cysteine 20, cysteine 10-cysteine 22, and cysteine 16-cysteine 28.

This sequence belongs to the protease inhibitor I7 (squash-type serine protease inhibitor) family.

The protein localises to the secreted. Strongly inhibits trypsin, weakly inhibits chymotrypsin. This Cyclanthera pedata (Achocha) protein is Trypsin inhibitor 4.